Consider the following 406-residue polypeptide: 4-hydroxy-3-methylbut-2-en-1-yl diphosphate synthase (ferredoxin) (406 aa).

Positions 313, 316, 347, and 354 each coordinate [4Fe-4S] cluster.

This sequence belongs to the IspG family. The cofactor is [4Fe-4S] cluster.

It catalyses the reaction (2E)-4-hydroxy-3-methylbut-2-enyl diphosphate + 2 oxidized [2Fe-2S]-[ferredoxin] + H2O = 2-C-methyl-D-erythritol 2,4-cyclic diphosphate + 2 reduced [2Fe-2S]-[ferredoxin] + H(+). Its pathway is isoprenoid biosynthesis; isopentenyl diphosphate biosynthesis via DXP pathway; isopentenyl diphosphate from 1-deoxy-D-xylulose 5-phosphate: step 5/6. Functionally, converts 2C-methyl-D-erythritol 2,4-cyclodiphosphate (ME-2,4cPP) into 1-hydroxy-2-methyl-2-(E)-butenyl 4-diphosphate. This Picosynechococcus sp. (strain ATCC 27264 / PCC 7002 / PR-6) (Agmenellum quadruplicatum) protein is 4-hydroxy-3-methylbut-2-en-1-yl diphosphate synthase (ferredoxin).